The chain runs to 741 residues: Penicillin-binding protein 1B (741 aa).

Topologically, residues 1-12 (MYPVNLKLSIKF) are cytoplasmic. A helical; Signal-anchor for type II membrane protein membrane pass occupies residues 13–33 (LFYFFLYFLLIIIIYGVYLYF). Residues 34–741 (KINQVIHGKI…WIRNHNIFCT (708 aa)) are Extracellular-facing. The segment at 139 to 311 (LRLDPQLIAM…SLYNPWNNPV (173 aa)) is transglycosylase. The Proton donor; for transglycosylase activity role is filled by E177. The segment at 395–687 (ENAIRHGIQQ…STGAMKIYHN (293 aa)) is transpeptidase. S454 functions as the Acyl-ester intermediate; for transpeptidase activity in the catalytic mechanism.

It in the N-terminal section; belongs to the glycosyltransferase 51 family. The protein in the C-terminal section; belongs to the transpeptidase family.

Its subcellular location is the cell membrane. It catalyses the reaction [GlcNAc-(1-&gt;4)-Mur2Ac(oyl-L-Ala-gamma-D-Glu-L-Lys-D-Ala-D-Ala)](n)-di-trans,octa-cis-undecaprenyl diphosphate + beta-D-GlcNAc-(1-&gt;4)-Mur2Ac(oyl-L-Ala-gamma-D-Glu-L-Lys-D-Ala-D-Ala)-di-trans,octa-cis-undecaprenyl diphosphate = [GlcNAc-(1-&gt;4)-Mur2Ac(oyl-L-Ala-gamma-D-Glu-L-Lys-D-Ala-D-Ala)](n+1)-di-trans,octa-cis-undecaprenyl diphosphate + di-trans,octa-cis-undecaprenyl diphosphate + H(+). The catalysed reaction is Preferential cleavage: (Ac)2-L-Lys-D-Ala-|-D-Ala. Also transpeptidation of peptidyl-alanyl moieties that are N-acyl substituents of D-alanine.. It functions in the pathway cell wall biogenesis; peptidoglycan biosynthesis. Its function is as follows. Cell wall formation. Synthesis of cross-linked peptidoglycan from the lipid intermediates. The enzyme has a penicillin-insensitive transglycosylase N-terminal domain (formation of linear glycan strands) and a penicillin-sensitive transpeptidase C-terminal domain (cross-linking of the peptide subunits). This is Penicillin-binding protein 1B (mrcB) from Buchnera aphidicola subsp. Baizongia pistaciae (strain Bp).